A 41-amino-acid chain; its full sequence is U-megalopygitoxin(4)-Mo5 (41 aa).

The signal sequence occupies residues 1 to 23; that stretch reads MKCSLLLVVFAAMVALFAAGTNA.

The protein belongs to the caterpillar 4 family. As to expression, expressed by the venom apparatus.

Its subcellular location is the secreted. Its function is as follows. Probable toxin. This is U-megalopygitoxin(4)-Mo5 from Megalopyge opercularis (Southern flannel moth).